The primary structure comprises 397 residues: Aromatic-amino-acid aminotransferase (397 aa).

Substrate is bound by residues Gly-34, Tyr-66, Trp-131, and Asn-184. Residue Lys-247 is modified to N6-(pyridoxal phosphate)lysine. 2 residues coordinate substrate: Arg-281 and Arg-375.

This sequence belongs to the class-I pyridoxal-phosphate-dependent aminotransferase family. As to quaternary structure, homodimer. Pyridoxal 5'-phosphate serves as cofactor.

The protein resides in the cytoplasm. The enzyme catalyses an aromatic L-alpha-amino acid + 2-oxoglutarate = an aromatic oxo-acid + L-glutamate. It carries out the reaction (3S)-3-methyl-L-phenylalanine + 2-oxoglutarate = (3S)-2-oxo-3-phenylbutanoate + L-glutamate. Its pathway is amino-acid biosynthesis; L-phenylalanine biosynthesis; L-phenylalanine from phenylpyruvate (ArAT route): step 1/1. It participates in amino-acid biosynthesis; L-tyrosine biosynthesis; L-tyrosine from (4-hydroxyphenyl)pyruvate: step 1/1. Functionally, broad-specificity enzyme that catalyzes the transamination of 2-ketoisocaproate, p-hydroxyphenylpyruvate, and phenylpyruvate to yield leucine, tyrosine, and phenylalanine, respectively. In vitro, is able to catalyze the conversion of beta-methyl phenylpyruvate to the nonproteinogenic amino acid (2S,3S)-beta-methyl-phenylalanine, a building block of the antibiotic mannopeptimycin produced by Streptomyces hygroscopicus NRRL3085. In Escherichia coli (strain K12), this protein is Aromatic-amino-acid aminotransferase (tyrB).